The primary structure comprises 314 residues: MAAAARPVDVVRHFPCSSSVAASSSLLLSRSKSRLASPAAAAASSMRRRLVLGVGAAAAPAVAALAASATPAALRDCAATLLITAGAYSLVRAFDGLTARRLIEQNLSRKIVHVLSGVLFMSSWPLFSNSTEARFFAAIVPLLNCIRLLTYGLRLSTDEALVKSVTREGKPEELLRGPLYYVIVLLVSVLVFWRQSPIGIVSLSMMSGGDGFADIVGRRYGSAKLPFNENKSWIGSISMFISGFLLSALMLFYFSCLGYFTVCWDLALGKLALVALAATVVECIPVNDVVDDNISVPLATMLAAYLLFGYSSCC.

The transit peptide at M1–V62 directs the protein to the chloroplast. The next 7 membrane-spanning stretches (helical) occupy residues A72–V91, I111–T131, F135–L155, Y181–V201, I234–F254, L266–V286, and I294–C314.

The protein belongs to the polyprenol kinase family.

The protein resides in the plastid. It localises to the chloroplast membrane. The enzyme catalyses phytol + CTP = phytyl phosphate + CDP + H(+). Its pathway is cofactor biosynthesis; tocopherol biosynthesis. In terms of biological role, involved in the activation and reutilization of phytol from chlorophyll degradation in plant metabolism, including tocopherol biosynthesis. Catalyzes the conversion of phytol to phytol monophosphate (PMP). This is Probable phytol kinase 1, chloroplastic from Oryza sativa subsp. japonica (Rice).